We begin with the raw amino-acid sequence, 306 residues long: Probable GTP 3',8-cyclase (306 aa).

In terms of domain architecture, Radical SAM core spans 5-232 (RFGRPVTNLR…RRRKYFLPVD (228 aa)). Arginine 14 provides a ligand contact to GTP. [4Fe-4S] cluster contacts are provided by cysteine 21 and cysteine 25. Position 27 (tyrosine 27) interacts with S-adenosyl-L-methionine. Cysteine 28 is a binding site for [4Fe-4S] cluster. A GTP-binding site is contributed by lysine 61. S-adenosyl-L-methionine is bound at residue glycine 65. Threonine 90 provides a ligand contact to GTP. Serine 114 is a binding site for S-adenosyl-L-methionine. Lysine 150 is a binding site for GTP. Methionine 189 lines the S-adenosyl-L-methionine pocket. [4Fe-4S] cluster-binding residues include cysteine 250 and cysteine 253. 255–257 (RLR) provides a ligand contact to GTP. Residue cysteine 267 coordinates [4Fe-4S] cluster.

It belongs to the radical SAM superfamily. MoaA family. Requires [4Fe-4S] cluster as cofactor.

It carries out the reaction GTP + AH2 + S-adenosyl-L-methionine = (8S)-3',8-cyclo-7,8-dihydroguanosine 5'-triphosphate + 5'-deoxyadenosine + L-methionine + A + H(+). The protein operates within cofactor biosynthesis; molybdopterin biosynthesis. Catalyzes the cyclization of GTP to (8S)-3',8-cyclo-7,8-dihydroguanosine 5'-triphosphate. This Pyrococcus abyssi (strain GE5 / Orsay) protein is Probable GTP 3',8-cyclase.